The primary structure comprises 424 residues: Serine--tRNA ligase (424 aa).

232–234 (TAE) provides a ligand contact to L-serine. Residue 263–265 (RKE) coordinates ATP. Glutamate 286 provides a ligand contact to L-serine. 350 to 353 (EISS) contributes to the ATP binding site. Serine 386 contacts L-serine.

Belongs to the class-II aminoacyl-tRNA synthetase family. Type-1 seryl-tRNA synthetase subfamily. As to quaternary structure, homodimer. The tRNA molecule binds across the dimer.

It is found in the cytoplasm. It carries out the reaction tRNA(Ser) + L-serine + ATP = L-seryl-tRNA(Ser) + AMP + diphosphate + H(+). It catalyses the reaction tRNA(Sec) + L-serine + ATP = L-seryl-tRNA(Sec) + AMP + diphosphate + H(+). The protein operates within aminoacyl-tRNA biosynthesis; selenocysteinyl-tRNA(Sec) biosynthesis; L-seryl-tRNA(Sec) from L-serine and tRNA(Sec): step 1/1. Its function is as follows. Catalyzes the attachment of serine to tRNA(Ser). Is also able to aminoacylate tRNA(Sec) with serine, to form the misacylated tRNA L-seryl-tRNA(Sec), which will be further converted into selenocysteinyl-tRNA(Sec). This Thermodesulfovibrio yellowstonii (strain ATCC 51303 / DSM 11347 / YP87) protein is Serine--tRNA ligase.